The primary structure comprises 216 residues: Cytidylate kinase (216 aa).

Residue 7-15 (GPSGTGKST) coordinates ATP.

It belongs to the cytidylate kinase family. Type 1 subfamily.

The protein localises to the cytoplasm. The enzyme catalyses CMP + ATP = CDP + ADP. It carries out the reaction dCMP + ATP = dCDP + ADP. The chain is Cytidylate kinase from Chlamydia pneumoniae (Chlamydophila pneumoniae).